We begin with the raw amino-acid sequence, 1121 residues long: Brassinosteroid LRR receptor kinase BRI1 (1121 aa).

The first 24 residues, 1-24 (MDSLWAAIAALFVAAAVVVRGAAA), serve as a signal peptide directing secretion. Positions 54–61 (CRFPGAGC) match the Cys pair 1 motif. LRR repeat units lie at residues 90-114 (LGSV…GGAR), 116-142 (GSKL…ALAS), 144-167 (CGGL…GGGG), 170-193 (FAGL…RWMV), 197-221 (VGAV…NCSG), 223-243 (QYLD…ALSD), 244-268 (CRGL…IAGL), 269-292 (TSLN…AFAK), 294-317 (QQLT…VASL), 318-341 (PELQ…LCQD), 343-367 (NSKL…VSNC), 369-391 (SLVS…LGDL), 392-415 (GNLQ…LSRI), 416-439 (QGLE…LAKC), 441-463 (KLNW…LGKL), 464-487 (SYLA…LGDC), and 489-511 (SLVW…LAKQ). The N-linked (GlcNAc...) asparagine glycan is linked to Asn-102. Asn-151 carries an N-linked (GlcNAc...) asparagine glycan. An N-linked (GlcNAc...) asparagine glycan is attached at Asn-218. N-linked (GlcNAc...) asparagine glycans are attached at residues Asn-251, Asn-275, Asn-280, and Asn-307. Asn-366 and Asn-381 each carry an N-linked (GlcNAc...) asparagine glycan. 2 N-linked (GlcNAc...) asparagine glycosylation sites follow: Asn-473 and Asn-501. Brassinolide is bound at residue Tyr-525. Residues 541 to 564 (GSLLEFTSIRPDDLSRMPSKKLCN) form an LRR 18 repeat. An N-linked (GlcNAc...) asparagine glycan is attached at Asn-564. Tyr-569 contacts brassinolide. Asn-580 carries an N-linked (GlcNAc...) asparagine glycan. 4 LRR repeats span residues 580–603 (NGSM…ELGD), 604–628 (MFYL…LAEA), 629–651 (KKLA…SFSA), and 652–676 (LSLS…SLAT). 3 N-linked (GlcNAc...) asparagine glycosylation sites follow: Asn-658, Asn-665, and Asn-684. The Cys pair 2 signature appears at 689 to 696 (CGFPLPPC). The segment at 693–712 (LPPCDHSSPRSSNDHQSHRR) is disordered. Residues 719–739 (SIAMGLLFSLFCIIVIIIAIG) form a helical membrane-spanning segment. One can recognise a Protein kinase domain in the interval 807 to 1083 (FHIACQIGSG…LKVMAMFKEI (277 aa)). Residues 813–821 (IGSGGFGDV), Lys-835, 881–883 (DYM), 887–890 (SLED), 933–938 (DMKSSN), and Asp-951 contribute to the ATP site. Asp-933 serves as the catalytic Proton acceptor.

This sequence belongs to the protein kinase superfamily. Ser/Thr protein kinase family. Interacts with BIP103 and BIP131. Interacts with BAK1. Interacts with BSK3. Interacts with SERK2. In terms of tissue distribution, highly expressed in shoots. Expressed at low levels in roots.

It is found in the cell membrane. The catalysed reaction is L-seryl-[protein] + ATP = O-phospho-L-seryl-[protein] + ADP + H(+). It catalyses the reaction L-threonyl-[protein] + ATP = O-phospho-L-threonyl-[protein] + ADP + H(+). Functionally, receptor kinase involved brassinosteroid (BR) signal transduction. Regulates, in response to BR binding, a signaling cascade involved in plant development, promotion of cell elongation and flowering. Activates BR signaling by targeting and phosphorylating BSK3, a positive regulator of BR signaling. Forms at the plasma membrane a receptor complex with BAK1 which is activated in response to brassinolide. Phosphorylates BAK1. Phosphorylates REM4.1, which reduces REM4.1 binding affinity to BAK1 and allows the formation and subsequent activation of the BRI1-BAK1 receptor complex. Functions in various growth and developmental processes, such as internode elongation, bending of the lamina joint and skotomorphogenesis. Functions in internode elongation by inducing the formation of the intercalary meristem and the longitudinal elongation of internode cells. Involved in organ development through the control of cell division and elongation. Does not seem essential for organ pattern formation or organ initiation. The protein is Brassinosteroid LRR receptor kinase BRI1 of Oryza sativa subsp. japonica (Rice).